The sequence spans 118 residues: Large ribosomal subunit protein uL22 (118 aa).

Belongs to the universal ribosomal protein uL22 family. In terms of assembly, part of the 50S ribosomal subunit.

In terms of biological role, this protein binds specifically to 23S rRNA; its binding is stimulated by other ribosomal proteins, e.g. L4, L17, and L20. It is important during the early stages of 50S assembly. It makes multiple contacts with different domains of the 23S rRNA in the assembled 50S subunit and ribosome. Functionally, the globular domain of the protein is located near the polypeptide exit tunnel on the outside of the subunit, while an extended beta-hairpin is found that lines the wall of the exit tunnel in the center of the 70S ribosome. This Listeria innocua serovar 6a (strain ATCC BAA-680 / CLIP 11262) protein is Large ribosomal subunit protein uL22.